Here is a 408-residue protein sequence, read N- to C-terminus: LL-diaminopimelate aminotransferase (408 aa).

Positions 15 and 42 each coordinate substrate. Pyridoxal 5'-phosphate contacts are provided by residues Y72, 108-109, Y132, N187, Y218, and 246-248; these read SK and SFS. The substrate site is built by K109, Y132, and N187. K249 carries the N6-(pyridoxal phosphate)lysine modification. Pyridoxal 5'-phosphate is bound by residues R257 and N292. N292 and R388 together coordinate substrate.

Belongs to the class-I pyridoxal-phosphate-dependent aminotransferase family. LL-diaminopimelate aminotransferase subfamily. In terms of assembly, homodimer. Requires pyridoxal 5'-phosphate as cofactor.

The enzyme catalyses (2S,6S)-2,6-diaminopimelate + 2-oxoglutarate = (S)-2,3,4,5-tetrahydrodipicolinate + L-glutamate + H2O + H(+). Its pathway is amino-acid biosynthesis; L-lysine biosynthesis via DAP pathway; LL-2,6-diaminopimelate from (S)-tetrahydrodipicolinate (aminotransferase route): step 1/1. In terms of biological role, involved in the synthesis of meso-diaminopimelate (m-DAP or DL-DAP), required for both lysine and peptidoglycan biosynthesis. Catalyzes the direct conversion of tetrahydrodipicolinate to LL-diaminopimelate. This is LL-diaminopimelate aminotransferase from Prochlorococcus marinus (strain MIT 9211).